The chain runs to 56 residues: uncharacterized protein (56 aa).

The chain crosses the membrane as a helical span at residues 2 to 22 (ILYIIVAISILLNIILGIKVI).

The protein localises to the membrane. This is an uncharacterized protein from Methanocaldococcus jannaschii (strain ATCC 43067 / DSM 2661 / JAL-1 / JCM 10045 / NBRC 100440) (Methanococcus jannaschii).